A 61-amino-acid polypeptide reads, in one-letter code: MLQISNLLLVADVSAQAANNSAVGMIGSFIAAALLIVIPATAFLIFVSQNDSLERTSTGRR.

A helical transmembrane segment spans residues 26–46 (IGSFIAAALLIVIPATAFLIF).

This sequence belongs to the PsbX family. Type 2 subfamily. In terms of assembly, PSII consists of a core antenna complex that captures photons, and an electron transfer chain that converts photonic excitation into a charge separation. PSII forms dimeric complexes.

It is found in the cellular thylakoid membrane. Its function is as follows. Involved in the binding and/or turnover of quinones at the Q(B) site of Photosystem II. In Prochlorococcus marinus (strain MIT 9215), this protein is Photosystem II reaction center X protein.